We begin with the raw amino-acid sequence, 134 residues long: Large ribosomal subunit protein uL14 (134 aa).

Belongs to the universal ribosomal protein uL14 family. In the 70S ribosome, L14 and L19 interact and together make contacts with the 16S rRNA in bridges B5 and B8. Part of the 50S ribosomal subunit. Forms a cluster with proteins L3 and L19.

Forms part of two intersubunit bridges in the 70S ribosome. Binds to 23S rRNA. The chain is Large ribosomal subunit protein uL14 from Deinococcus radiodurans (strain ATCC 13939 / DSM 20539 / JCM 16871 / CCUG 27074 / LMG 4051 / NBRC 15346 / NCIMB 9279 / VKM B-1422 / R1).